The sequence spans 583 residues: Aspartate--tRNA ligase (583 aa).

An L-aspartate-binding site is contributed by E174. The aspartate stretch occupies residues 198 to 201 (QITK). R220 lines the L-aspartate pocket. ATP-binding positions include 220 to 222 (RDE) and Q229. H443 contacts L-aspartate. E477 contributes to the ATP binding site. R484 contributes to the L-aspartate binding site. 529–532 (GLDR) is a binding site for ATP.

Belongs to the class-II aminoacyl-tRNA synthetase family. Type 1 subfamily. Homodimer.

The protein localises to the cytoplasm. The catalysed reaction is tRNA(Asp) + L-aspartate + ATP = L-aspartyl-tRNA(Asp) + AMP + diphosphate. In terms of biological role, catalyzes the attachment of L-aspartate to tRNA(Asp) in a two-step reaction: L-aspartate is first activated by ATP to form Asp-AMP and then transferred to the acceptor end of tRNA(Asp). The polypeptide is Aspartate--tRNA ligase (Streptococcus suis (strain 98HAH33)).